A 236-amino-acid chain; its full sequence is Urease accessory protein UreF (236 aa).

This sequence belongs to the UreF family. UreD, UreF and UreG form a complex that acts as a GTP-hydrolysis-dependent molecular chaperone, activating the urease apoprotein by helping to assemble the nickel containing metallocenter of UreC. The UreE protein probably delivers the nickel.

The protein resides in the cytoplasm. Its function is as follows. Required for maturation of urease via the functional incorporation of the urease nickel metallocenter. The protein is Urease accessory protein UreF of Granulibacter bethesdensis (strain ATCC BAA-1260 / CGDNIH1).